Reading from the N-terminus, the 988-residue chain is Next to BRCA1 gene 1 protein (988 aa).

A PB1 domain is found at 4–86 (QVTLNVTFKN…NQLQMQVHEG (83 aa)). S117 is modified (phosphoserine). The tract at residues 126 to 150 (MKTTEEPAPEQCSSAPCDTDQPQDK) is disordered. A ZZ-type zinc finger spans residues 213 to 265 (SWHIACSHCQKRIVGVRYQCSLCPSYNICEDCEAGPYTHDTNHVLLKLRRPVV). 8 residues coordinate Zn(2+): C218, C221, C232, C235, C241, C244, H251, and H255. 2 ATG8 family proteins-binding regions span residues 543-637 (ASER…PASV) and 745-756 (ASSEDYIIILPE). The residue at position 587 (T587) is a Phosphothreonine. Phosphoserine occurs at positions 591, 597, and 626. A disordered region spans residues 611-644 (ESEGAGFKAPPDSTVSAKRKAETPASVEETEEDL). 2 disordered regions span residues 768-822 (MYSS…TSQP) and 841-900 (RSAP…HHNG). A compositionally biased stretch (basic and acidic residues) spans 795–807 (TEARERLPERESQ). Residues 808 to 822 (PQEQSISDILTTSQP) show a composition bias toward polar residues. S860 is subject to Phosphoserine. Residues 935-979 (SEDQTTALMAHLFEMGFCDRQLNLRLLRKHNYNILQVVTELLQVN) enclose the UBA domain.

As to quaternary structure, homooligomer and heterooligomer. Interacts with TRIM55. Interacts with titin/TTN. Interacts with RNF29, USP8, MAP1LC3A, MAP1LC3B, MAP1LC3C, GABARAP, GABARAPL1 and GABARAPL2. Binds to ubiquitin and ubiquitinated proteins. Interacts with SQSTM1. Interacts with TAX1BP1. Interacts with IRF3; this interaction mediates autophagic degradation of IRF3. Interacts with IL12A and IL12B. Post-translationally, phosphorylated by GSK3A; this phosphorylation inhibits NBR1 involvement in the formation of ubiquitinated protein aggregates. Expressed in brain.

It localises to the cytoplasm. It is found in the cytoplasmic vesicle. The protein resides in the autophagosome. Its subcellular location is the lysosome. The protein localises to the myofibril. It localises to the sarcomere. It is found in the m line. Functionally, ubiquitin-binding autophagy adapter that participates in different processes including host defense or intracellular homeostasis. Possesses a double function during the selective autophagy by acting as a shuttle bringing ubiquitinated proteins to autophagosomes and also by participating in the formation of protein aggregates. Plays a role in the regulation of the innate immune response by modulating type I interferon production and targeting ubiquitinated IRF3 for autophagic degradation. In response to oxidative stress, promotes an increase in SQSTM1 levels, phosphorylation, and body formation by preventing its autophagic degradation. In turn, activates the KEAP1-NRF2/NFE2L2 antioxidant pathway. Also plays non-autophagy role by mediating the shuttle of IL-12 to late endosome for subsequent secretion. The sequence is that of Next to BRCA1 gene 1 protein (Nbr1) from Mus musculus (Mouse).